The sequence spans 398 residues: Stearoyl-[acyl-carrier-protein] 9-desaturase, chloroplastic (398 aa).

The N-terminal 34 residues, 1–34 (MALKLNPLASQPYNFPSSARPPISTFRSPKFLCL), are a transit peptide targeting the chloroplast. Residues E140, E178, H181, E231, E264, and H267 each contribute to the Fe cation site.

It belongs to the fatty acid desaturase type 2 family. As to quaternary structure, homodimer. Fe(2+) is required as a cofactor.

The protein resides in the plastid. The protein localises to the chloroplast. It carries out the reaction octadecanoyl-[ACP] + 2 reduced [2Fe-2S]-[ferredoxin] + O2 + 2 H(+) = (9Z)-octadecenoyl-[ACP] + 2 oxidized [2Fe-2S]-[ferredoxin] + 2 H2O. The protein operates within lipid metabolism; fatty acid metabolism. Converts stearoyl-ACP to oleoyl-ACP by introduction of a cis double bond between carbons 9 and 10 of the acyl chain. The protein is Stearoyl-[acyl-carrier-protein] 9-desaturase, chloroplastic of Brassica napus (Rape).